The chain runs to 142 residues: Small ribosomal subunit protein uS12 (142 aa).

The interval 1-44 (MANGKYAARKLKKDRQKHRWSDTDYARRERGLGKKSDPLEGAPQ) is disordered. Over residues 7-18 (AARKLKKDRQKH) the composition is skewed to basic residues. Positions 19–38 (RWSDTDYARRERGLGKKSDP) are enriched in basic and acidic residues.

The protein belongs to the universal ribosomal protein uS12 family. In terms of assembly, part of the 30S ribosomal subunit.

Its function is as follows. With S4 and S5 plays an important role in translational accuracy. Located at the interface of the 30S and 50S subunits. This chain is Small ribosomal subunit protein uS12, found in Haloarcula marismortui (strain ATCC 43049 / DSM 3752 / JCM 8966 / VKM B-1809) (Halobacterium marismortui).